We begin with the raw amino-acid sequence, 299 residues long: Phosphatidylserine decarboxylase proenzyme (299 aa).

Residues Asp115, His171, and Ser258 each act as charge relay system; for autoendoproteolytic cleavage activity in the active site. Ser258 acts as the Schiff-base intermediate with substrate; via pyruvic acid; for decarboxylase activity in catalysis. Ser258 bears the Pyruvic acid (Ser); by autocatalysis mark.

Belongs to the phosphatidylserine decarboxylase family. PSD-B subfamily. Prokaryotic type II sub-subfamily. Heterodimer of a large membrane-associated beta subunit and a small pyruvoyl-containing alpha subunit. Requires pyruvate as cofactor. Post-translationally, is synthesized initially as an inactive proenzyme. Formation of the active enzyme involves a self-maturation process in which the active site pyruvoyl group is generated from an internal serine residue via an autocatalytic post-translational modification. Two non-identical subunits are generated from the proenzyme in this reaction, and the pyruvate is formed at the N-terminus of the alpha chain, which is derived from the carboxyl end of the proenzyme. The autoendoproteolytic cleavage occurs by a canonical serine protease mechanism, in which the side chain hydroxyl group of the serine supplies its oxygen atom to form the C-terminus of the beta chain, while the remainder of the serine residue undergoes an oxidative deamination to produce ammonia and the pyruvoyl prosthetic group on the alpha chain. During this reaction, the Ser that is part of the protease active site of the proenzyme becomes the pyruvoyl prosthetic group, which constitutes an essential element of the active site of the mature decarboxylase.

The protein resides in the cell membrane. It carries out the reaction a 1,2-diacyl-sn-glycero-3-phospho-L-serine + H(+) = a 1,2-diacyl-sn-glycero-3-phosphoethanolamine + CO2. Its pathway is phospholipid metabolism; phosphatidylethanolamine biosynthesis; phosphatidylethanolamine from CDP-diacylglycerol: step 2/2. In terms of biological role, catalyzes the formation of phosphatidylethanolamine (PtdEtn) from phosphatidylserine (PtdSer). This Chlamydia felis (strain Fe/C-56) (Chlamydophila felis) protein is Phosphatidylserine decarboxylase proenzyme.